A 138-amino-acid polypeptide reads, in one-letter code: Basic phospholipase A2 ammodytoxin B (138 aa).

Positions 1-16 (MRTLWIVAVCLIGVEG) are cleaved as a signal peptide. 7 disulfides stabilise this stretch: C42-C131, C44-C60, C59-C111, C65-C138, C66-C104, C73-C97, and C91-C102. Ca(2+) contacts are provided by Y43, G45, and G47. Residue H63 is part of the active site. Residue D64 participates in Ca(2+) binding. D105 is a catalytic residue.

The protein belongs to the phospholipase A2 family. Group II subfamily. D49 sub-subfamily. As to quaternary structure, monomer. Binds to calmodulin, coagulation factor X (F10), M-type PLA2 receptor (R-180), 14-3-3 proteins gamma (YWHAG) and epsilon (YWHAE), and R25, a mitochondrial membrane protein. Ca(2+) serves as cofactor. As to expression, expressed by the venom gland.

The protein localises to the secreted. It is found in the host cytoplasm. The protein resides in the host cytosol. The catalysed reaction is a 1,2-diacyl-sn-glycero-3-phosphocholine + H2O = a 1-acyl-sn-glycero-3-phosphocholine + a fatty acid + H(+). Functionally, snake venom phospholipase A2 (PLA2) that acts as a presynaptic neurotoxin, an inhibitor of blood coagulation, and has been found to bind with high affinity to intracellular proteins. The response of indirectly stimulated neuromuscular preparations to ammodytoxin (Atx) is triphasic. The first phase, the transient inhibition of the acetylcholine (ACh) release, starts soon after the addition of Atx and lasts for several minutes. This phase is probably independent of Atx enzymatic activity. The effect may be due to the specific binding of the toxin to presynaptic receptors. These receptors, called N-type receptors, are still unidentified. It is noteworthy that a neuronal isoform of the M-type PLA2 receptor (R180) has been identified as a high-affinity receptor for Atx in neuronal plasma membranes. It was demonstrated however that this receptor is not essential for expression of neurotoxicity by Atx. The second phase corresponds to an augmentation of neurotransmitter release. A peak is reached 10-20 minutes after exposure of the preparation to Atx and is followed by a gradual reduction. In this phase, the enzymatic activity of Atx of the mammalian is not significant. It is speculated that the increased release of neurotransmitter in this phase is induced by the interference of Atx with voltage-gated potassium channels. Measurements of ionic currents showed however that voltage-gated potassium channels are not affected by Atx. The third phase of the response of neuromuscular preparations to Atx, which corresponds to a complete and irreversible paralysis, is clearly dependent on the hydrolytic activity of the toxin. In addition to its presynaptic neurotoxicity, Atx shows an anticoagulant activity by binding with high affinity to activated coagulation factor X (F10) thus inhibiting the formation of the prothrombinase complex (FX/FV) and its activity (IC(50) is 82 nM). Surprisingly, Atx was discovered to bind intracellular proteins such as calmodulin (CaM), 14-3-3 proteins gamma (YWHAG) and epsilon (YWHAE) (by similarity with AtxC), as well as R25 (by similarity with AtxC), a mitochondrial integral membrane protein found in cerebral cortex. These findings raised a doubt about the dogma of the exclusively extracellular action of PLA2s, defended by the potential instability of these molecules in the reducing environment of the eukaryotic cytosol coupled with their possible inability to act as enzymes in this cellular compartment, due to too low concentration of calcium ions. This hypothesis was challenged efficiently by demonstrating the internalization of AtxA into a culture cells, but still remains to be directly demonstrated in vivo. PLA2 catalyzes the calcium-dependent hydrolysis of the 2-acyl groups in 3-sn-phosphoglycerides. The protein is Basic phospholipase A2 ammodytoxin B of Vipera ammodytes ammodytes (Western sand viper).